The primary structure comprises 303 residues: Putative 1-phosphofructokinase (303 aa).

Residues 217-222 (SDGDKG) and 249-250 (GD) each bind ATP. The active-site Proton acceptor is the D250.

The protein belongs to the carbohydrate kinase PfkB family.

The catalysed reaction is beta-D-fructose 1-phosphate + ATP = beta-D-fructose 1,6-bisphosphate + ADP + H(+). Catalyzes the ATP-dependent phosphorylation of fructose-l-phosphate to fructose-l,6-bisphosphate. This chain is Putative 1-phosphofructokinase (fruK), found in Mycoplasma genitalium (strain ATCC 33530 / DSM 19775 / NCTC 10195 / G37) (Mycoplasmoides genitalium).